A 643-amino-acid polypeptide reads, in one-letter code: Macrolide export ATP-binding/permease protein MacB (643 aa).

One can recognise an ABC transporter domain in the interval 4–242; sequence IEIKELNRYF…VNNQSKAKSR (239 aa). 40 to 47 serves as a coordination point for ATP; the sequence is GQSGSGKS. Helical transmembrane passes span 269–289, 523–543, 572–592, and 603–623; these read LLTM…VALG, IAFI…LVSV, ILIC…IGGI, and VFST…GVIF.

It belongs to the ABC transporter superfamily. Macrolide exporter (TC 3.A.1.122) family. As to quaternary structure, homodimer. Part of the tripartite efflux system MacAB-TolC, which is composed of an inner membrane transporter, MacB, a periplasmic membrane fusion protein, MacA, and an outer membrane component, TolC. The complex forms a large protein conduit and can translocate molecules across both the inner and outer membranes. Interacts with MacA.

It is found in the cell inner membrane. In terms of biological role, part of the tripartite efflux system MacAB-TolC. MacB is a non-canonical ABC transporter that contains transmembrane domains (TMD), which form a pore in the inner membrane, and an ATP-binding domain (NBD), which is responsible for energy generation. Confers resistance against macrolides. This Mannheimia succiniciproducens (strain KCTC 0769BP / MBEL55E) protein is Macrolide export ATP-binding/permease protein MacB.